The sequence spans 329 residues: Succinylglutamate desuccinylase (329 aa).

Positions 53, 56, and 148 each coordinate Zn(2+). E211 is a catalytic residue.

It belongs to the AspA/AstE family. Succinylglutamate desuccinylase subfamily. The cofactor is Zn(2+).

It catalyses the reaction N-succinyl-L-glutamate + H2O = L-glutamate + succinate. Its pathway is amino-acid degradation; L-arginine degradation via AST pathway; L-glutamate and succinate from L-arginine: step 5/5. Functionally, transforms N(2)-succinylglutamate into succinate and glutamate. In Erwinia tasmaniensis (strain DSM 17950 / CFBP 7177 / CIP 109463 / NCPPB 4357 / Et1/99), this protein is Succinylglutamate desuccinylase.